The chain runs to 330 residues: MIHVYYDKDANLGLLEEKMIAVLGYGSQGHAQAQNLKDSGLNVIVGLRKGSSSWKKAESDGFRVFKTSEAVKRADIIQVLIPDEVQSRVYKEDIEPYLEEGNALVFSHGFNIHFGQIVPPDNVDIFMVAPKSPGHLVRRMYLEGKGVPGLLAVEQDYSGKAKELGLAYAKGIGCTKAGVIETTFKEETETDLFGEQAVLCGGVTSLVKAGFEVLVEAGYQPEIAYFECLNELKLIVDLMFEGGLTKMRHSISDTAQYGDLMVGPRIVNDNVKDEMRSVLKEIQSGEFAKKWILENKANRPVFNALTSKDENHLIEKVGKKLRDMMPWINE.

Positions 2-182 (IHVYYDKDAN…GCTKAGVIET (181 aa)) constitute a KARI N-terminal Rossmann domain. NADP(+) contacts are provided by residues 25–28 (YGSQ), Arg-48, Ser-51, Ser-53, and 83–86 (DEVQ). The active site involves His-108. An NADP(+)-binding site is contributed by Gly-134. A KARI C-terminal knotted domain is found at 183–328 (TFKEETETDL…KKLRDMMPWI (146 aa)). Asp-191, Glu-195, Glu-227, and Glu-231 together coordinate Mg(2+). Substrate is bound at residue Ser-252.

Belongs to the ketol-acid reductoisomerase family. The cofactor is Mg(2+).

It catalyses the reaction (2R)-2,3-dihydroxy-3-methylbutanoate + NADP(+) = (2S)-2-acetolactate + NADPH + H(+). It carries out the reaction (2R,3R)-2,3-dihydroxy-3-methylpentanoate + NADP(+) = (S)-2-ethyl-2-hydroxy-3-oxobutanoate + NADPH + H(+). The protein operates within amino-acid biosynthesis; L-isoleucine biosynthesis; L-isoleucine from 2-oxobutanoate: step 2/4. Its pathway is amino-acid biosynthesis; L-valine biosynthesis; L-valine from pyruvate: step 2/4. Involved in the biosynthesis of branched-chain amino acids (BCAA). Catalyzes an alkyl-migration followed by a ketol-acid reduction of (S)-2-acetolactate (S2AL) to yield (R)-2,3-dihydroxy-isovalerate. In the isomerase reaction, S2AL is rearranged via a Mg-dependent methyl migration to produce 3-hydroxy-3-methyl-2-ketobutyrate (HMKB). In the reductase reaction, this 2-ketoacid undergoes a metal-dependent reduction by NADPH to yield (R)-2,3-dihydroxy-isovalerate. The chain is Ketol-acid reductoisomerase (NADP(+)) from Halothermothrix orenii (strain H 168 / OCM 544 / DSM 9562).